The chain runs to 808 residues: Sucrose synthase 4 (808 aa).

The GT-B glycosyltransferase stretch occupies residues 277–754; it reads MVFNVVILSP…GLERIQEKYT (478 aa).

The protein belongs to the glycosyltransferase 1 family. Plant sucrose synthase subfamily. In terms of tissue distribution, detected in the whole plant with highest expression in young rosette leaves and roots.

It carries out the reaction an NDP-alpha-D-glucose + D-fructose = a ribonucleoside 5'-diphosphate + sucrose + H(+). In terms of biological role, sucrose-cleaving enzyme that provides UDP-glucose and fructose for various metabolic pathways. The protein is Sucrose synthase 4 (SUS4) of Arabidopsis thaliana (Mouse-ear cress).